The following is a 340-amino-acid chain: MLSLSKNWNTLIKPNKVAYENFPETNNKAKIVVEPLERGFGLTLGNAMRRVLLSSLQGAAITSIKIPAIEHEFSSIPGVKEDVSEVILNIKGIEVKMHVAEKRIMKLKATGPCVVTAGMIETGHDVEILNPDHVICDLAKDKQLEMELTCKVGKGYVLSTNNYEDNLPIGEIAIDALFNPVKSVTYKVENTRVGQVTDYDKLIMFVETNGAVLPEMAVGLAARILQEQLQLFISFEEQEEDKQVKTDALPFSPYLLKRVDELELSVRSANCLKNDNIIYIGDLVKRTEADMLRTPNFGRKSLNEIKEILAKFNLRFGMDVPDWPPENMQELSKRYEDSYN.

Residues 1 to 236 (MLSLSKNWNT…EQLQLFISFE (236 aa)) form an alpha N-terminal domain (alpha-NTD) region. The tract at residues 251–340 (FSPYLLKRVD…LSKRYEDSYN (90 aa)) is alpha C-terminal domain (alpha-CTD).

Belongs to the RNA polymerase alpha chain family. As to quaternary structure, homodimer. The RNAP catalytic core consists of 2 alpha, 1 beta, 1 beta' and 1 omega subunit. When a sigma factor is associated with the core the holoenzyme is formed, which can initiate transcription.

It carries out the reaction RNA(n) + a ribonucleoside 5'-triphosphate = RNA(n+1) + diphosphate. Functionally, DNA-dependent RNA polymerase catalyzes the transcription of DNA into RNA using the four ribonucleoside triphosphates as substrates. The chain is DNA-directed RNA polymerase subunit alpha from Rickettsia rickettsii (strain Iowa).